The sequence spans 1368 residues: DNA-directed RNA polymerase subunit beta (1368 aa).

The protein belongs to the RNA polymerase beta chain family. In terms of assembly, the RNAP catalytic core consists of 2 alpha, 1 beta, 1 beta' and 1 omega subunit. When a sigma factor is associated with the core the holoenzyme is formed, which can initiate transcription.

The enzyme catalyses RNA(n) + a ribonucleoside 5'-triphosphate = RNA(n+1) + diphosphate. Functionally, DNA-dependent RNA polymerase catalyzes the transcription of DNA into RNA using the four ribonucleoside triphosphates as substrates. The chain is DNA-directed RNA polymerase subunit beta from Janthinobacterium sp. (strain Marseille) (Minibacterium massiliensis).